The primary structure comprises 927 residues: DNA mismatch repair protein MutS (927 aa).

The disordered stretch occupies residues 44–80 (DESLKRPRNRHKPTSVPSIPLDSESQEQLETADNDND). The segment covering 67–79 (ESQEQLETADNDN) has biased composition (acidic residues). 725 to 732 (GPNASGKS) contributes to the ATP binding site.

Belongs to the DNA mismatch repair MutS family.

In terms of biological role, this protein is involved in the repair of mismatches in DNA. It is possible that it carries out the mismatch recognition step. This protein has a weak ATPase activity. This Prochlorococcus marinus (strain MIT 9303) protein is DNA mismatch repair protein MutS.